The primary structure comprises 845 residues: Synaptonemal complex protein 1 (845 aa).

An interaction with SYCE3 region spans residues 59 to 215 (ETRQVYVDLN…YQLTEEKEAQ (157 aa)). Coiled-coil stretches lie at residues 64–211 (YVDL…LTEE) and 244–544 (LRTE…EIEV). The tract at residues 550–644 (EKLLGEVEKA…VSLKKQLEIE (95 aa)) is required for pH-induced assembly of C-terminal ends into antiparallel tetramers. Positions 553–556 (LGEV) match the Nuclear localization signal motif. Positions 620-663 (KTALETELSNIRNELVSLKKQLEIEREEKEKLKLEKENTAILKD) form a coiled coil. Positions 657–845 (NTAILKDKKD…RLKEAEKLFA (189 aa)) are DNA-binding. S676 carries the phosphoserine modification. Over residues 684-703 (FDSKTTPSQNISRISSSMES) the composition is skewed to polar residues. Residues 684 to 709 (FDSKTTPSQNISRISSSMESGKTKDN) form a disordered region. The Nuclear localization signal motif lies at 753–756 (KKRK). The tract at residues 786 to 808 (LYNNNSPNSHLTPKQTPLSLSTP) is disordered.

In terms of assembly, structural component of synaptonemal complexes. Homotetramer that consists of an N-terminal four-helical bundle that bifurcates into two elongated C-terminal dimeric coiled coils. This tetrameric building block potentially self-assembles into a supramolecular zipper-like lattice to mediate meiotic chromosome synapsis. Self-assembly is likely initiated by local proton density at chromosome axis, which is predicted to trigger antiparallel back to back assembly of adjacent C-terminal ends into tetrameric structures that anchor to chromosomal DNA. Then the N-terminal ends are predicted to undergo cooperative antiparallel head to head assembly at the midline of synaptonemal complexes central element to form a zipper-like lattice between properly aligned homologous chromosomes. The nascent synapsis generated by SYCP1 is stabilized through interaction with central element proteins SYCE1 and SYCE2. Interacts (via tetrameric core) with SYCE3; the interaction remodels SYCP1 homotetramers to 2:1 heterotrimers with SYCE3. SYCP1/SYCE3 heterotrimers form lattice assemblies as part of the mature synaptonemal complex via both lateral and head-to-head interactions. Forms a complex with EWSR1, PRDM9, SYCP3 and REC8; complex formation is dependent of phosphorylated form of REC8 and requires PRDM9 bound to hotspot DNA; EWSR1 joins PRDM9 with the chromosomal axis through REC8. Interacts with SPO16.

The protein localises to the nucleus. It is found in the chromosome. Its subcellular location is the centromere. Major component of the transverse filaments of synaptonemal complexes, formed between homologous chromosomes during meiotic prophase. Required for normal assembly of the central element of the synaptonemal complexes. Required for normal centromere pairing during meiosis. Required for normal meiotic chromosome synapsis during oocyte and spermatocyte development and for normal male and female fertility. This chain is Synaptonemal complex protein 1, found in Mesocricetus auratus (Golden hamster).